We begin with the raw amino-acid sequence, 316 residues long: Beta-galactosidase small subunit (316 aa).

This sequence belongs to the bacterial beta-galactosidase small subunit family. In terms of assembly, heterodimer of a large (LacL) and a small subunit (LacM).

The catalysed reaction is Hydrolysis of terminal non-reducing beta-D-galactose residues in beta-D-galactosides.. Its function is as follows. Component of a beta-galactosidase. The chain is Beta-galactosidase small subunit (lacM) from Lactobacillus acidophilus (strain ATCC 700396 / NCK56 / N2 / NCFM).